Consider the following 188-residue polypeptide: uncharacterized protein (188 aa).

S14 bears the Phosphoserine mark. The segment at R165–H188 is disordered. The span at K171–H188 shows a compositional bias: basic residues.

It localises to the nucleus. It is found in the nucleolus. This is an uncharacterized protein from Schizosaccharomyces pombe (strain 972 / ATCC 24843) (Fission yeast).